The following is a 370-amino-acid chain: WAT1-related protein At1g44800 (370 aa).

10 consecutive transmembrane segments (helical) span residues 11-31 (PILA…ITMV), 41-61 (VLAT…ALMF), 67-87 (PKMT…EPLM), 102-122 (SYTS…ALIF), 142-162 (VITV…IEIV), 182-202 (WVLG…FFIL), 216-236 (LVTL…LIMV), 252-272 (AAVY…SIVI), 278-298 (VFTT…GALV), and 303-323 (IHLG…SVVW). EamA domains follow at residues 23-143 (AGMY…GTVI) and 195-322 (TWAA…YSVV).

This sequence belongs to the drug/metabolite transporter (DMT) superfamily. Plant drug/metabolite exporter (P-DME) (TC 2.A.7.4) family.

It is found in the membrane. The chain is WAT1-related protein At1g44800 from Arabidopsis thaliana (Mouse-ear cress).